A 759-amino-acid polypeptide reads, in one-letter code: Na(+)/H(+) exchanger beta (759 aa).

Topologically, residues 1–14 (MPAFSCAFPGCRRD) are cytoplasmic. Residues 15-34 (LLVIVLVVFVGIGLPIEASA) form a helical membrane-spanning segment. Topologically, residues 35–75 (PAYQSHGTEGSHLTNITNTKKAFPVLAVNYEHVRKPFEIAL) are extracellular. N-linked (GlcNAc...) asparagine glycosylation occurs at Asn49. A helical membrane pass occupies residues 76 to 95 (WILLALLMKLGFHLIPRLSA). Over 96 to 97 (VV) the chain is Cytoplasmic. Residues 98 to 117 (PESCLLIVVGLLVGGLIKVI) traverse the membrane as a helical segment. At 118–122 (GEEPP) the chain is on the extracellular side. A helical transmembrane segment spans residues 123–142 (VLDSQLFFLCLLPPIILDAG). Topologically, residues 143–149 (YFLPIRP) are cytoplasmic. A helical membrane pass occupies residues 150–169 (FTENVGTILVFAVIGTLWNA). Over 170 to 195 (FFMGGLLYALCQIESVGLSGVDLLAC) the chain is Extracellular. A helical transmembrane segment spans residues 196–214 (LLFGSIVSAVDPVAVLAVF). At 215–225 (EEIHINELVHI) the chain is on the cytoplasmic side. The helical transmembrane segment at 226–244 (LVFGESLLNDAVTVVLYNL) threads the bilayer. Topologically, residues 245-261 (FEEFSKVGTVTVLDVFL) are extracellular. A helical membrane pass occupies residues 262-282 (GVVCFFVVSLGGVLVGAIYGF). At 283–311 (LAAFTSRFTSHTRVIEPLFVFLYSYMAYL) the chain is on the cytoplasmic side. Residues 312-330 (SSEMFHLSGIMALIACGVV) traverse the membrane as a helical segment. Topologically, residues 331-352 (MRPYVEANISHKSYTTIKYFLK) are extracellular. N-linked (GlcNAc...) asparagine glycosylation is present at Asn338. Residues 353 to 372 (MWSSVSETLIFIFLGVSTVA) traverse the membrane as a helical segment. Residues 373–376 (GPHA) lie on the Cytoplasmic side of the membrane. The helical transmembrane segment at 377–398 (WNWTFVITTVILCLVSRVLGVI) threads the bilayer. Residues 399-446 (GLTFIINKFRIVKLTKKDQFIVAYGGLRGAIAFSLGYLLSNSHQMRNL) are Extracellular-facing. A helical membrane pass occupies residues 447-467 (FLTAIITVIFFTVFVQGMTIR). Over 468–759 (PLVELLAVKK…KEDDDPFMSC (292 aa)) the chain is Cytoplasmic. Phosphoserine; by PKA is present on residues Ser641 and Ser648. The segment at 681–759 (FPTVHFEQPS…KEDDDPFMSC (79 aa)) is disordered. Residues 707–719 (VPKRPSLKADIEG) show a composition bias toward basic and acidic residues.

Belongs to the monovalent cation:proton antiporter 1 (CPA1) transporter (TC 2.A.36) family. Activated by cAMP, protein kinase A and protein kinase C.

Its subcellular location is the basolateral cell membrane. Involved in pH regulation to eliminate acids generated by active metabolism or to counter adverse environmental conditions. Major proton extruding system driven by the inward sodium ion chemical gradient. The polypeptide is Na(+)/H(+) exchanger beta (Oncorhynchus mykiss (Rainbow trout)).